The primary structure comprises 400 residues: MAFLADALSRVKPSATIAVSQKARELKAKGRDVIGLGAGEPDFDTPDNIKKAAIDAIDRGETKYTPVSGIPELREAIAKKFKRENNLDYTAAQTIVGTGGKQILFNAFMATLNPGDEVVIPAPYWVSYPEMVALCGGTPVFVPTRQENNFKLKAEDLDRAITPKTKWFVFNSPSNPSGAAYSHEELKALTDVLMKHPHVWVLTDDMYEHLTYGDFRFATPVEVEPGLYERTLTMNGVSKAYAMTGWRIGYAAGPLHLIKAMDMIQGQQTSGAASIAQWAAVEALNGPQDFIGRNKEIFQGRRDLVVSMLNQAKGISCPTPEGAFYVYPSCAGLIGKTAPSGKVIETDEDFVSELLETEGVAVVHGSAFGLGPNFRISYATSEALLEEACRRIQRFCAACR.

L-aspartate-binding residues include G39, W125, and N175. Residue K239 is modified to N6-(pyridoxal phosphate)lysine. R375 serves as a coordination point for L-aspartate.

Belongs to the class-I pyridoxal-phosphate-dependent aminotransferase family. As to quaternary structure, homodimer. Pyridoxal 5'-phosphate serves as cofactor.

The protein localises to the cytoplasm. The enzyme catalyses L-aspartate + 2-oxoglutarate = oxaloacetate + L-glutamate. The catalysed reaction is L-arogenate + 2-oxoglutarate = prephenate + L-glutamate. In terms of biological role, catalyzes the reversible conversion of aspartate and 2-oxoglutarate to glutamate and oxaloacetate. Can also transaminate prephenate in the presence of glutamate. Required for symbiotic nitrogen fixation. The sequence is that of Aspartate/prephenate aminotransferase from Rhizobium meliloti (strain 1021) (Ensifer meliloti).